Reading from the N-terminus, the 319-residue chain is Acetyl-coenzyme A carboxylase carboxyl transferase subunit alpha (319 aa).

In terms of domain architecture, CoA carboxyltransferase C-terminal spans 39 to 296 (EINRLRSKSI…KTQLLLDLTE (258 aa)).

It belongs to the AccA family. In terms of assembly, acetyl-CoA carboxylase is a heterohexamer composed of biotin carboxyl carrier protein (AccB), biotin carboxylase (AccC) and two subunits each of ACCase subunit alpha (AccA) and ACCase subunit beta (AccD).

The protein resides in the cytoplasm. The enzyme catalyses N(6)-carboxybiotinyl-L-lysyl-[protein] + acetyl-CoA = N(6)-biotinyl-L-lysyl-[protein] + malonyl-CoA. The protein operates within lipid metabolism; malonyl-CoA biosynthesis; malonyl-CoA from acetyl-CoA: step 1/1. Its function is as follows. Component of the acetyl coenzyme A carboxylase (ACC) complex. First, biotin carboxylase catalyzes the carboxylation of biotin on its carrier protein (BCCP) and then the CO(2) group is transferred by the carboxyltransferase to acetyl-CoA to form malonyl-CoA. The protein is Acetyl-coenzyme A carboxylase carboxyl transferase subunit alpha of Blochmanniella pennsylvanica (strain BPEN).